A 187-amino-acid chain; its full sequence is Ribosome-recycling factor (187 aa).

The protein belongs to the RRF family.

The protein localises to the cytoplasm. Responsible for the release of ribosomes from messenger RNA at the termination of protein biosynthesis. May increase the efficiency of translation by recycling ribosomes from one round of translation to another. The polypeptide is Ribosome-recycling factor (Rhodopseudomonas palustris (strain BisB18)).